The sequence spans 283 residues: Putative F-box protein At1g60370 (283 aa).

An F-box domain is found at 4–53; it reads GEKLESIPIDLIIEIHSRLPAESVARFRCVSKLWGSMFRRPYFTELFLTR.

The chain is Putative F-box protein At1g60370 from Arabidopsis thaliana (Mouse-ear cress).